We begin with the raw amino-acid sequence, 99 residues long: Acylphosphatase (99 aa).

Residues 5 to 97 form the Acylphosphatase-like domain; sequence ILQVMIRGRV…RAGEKFSVLP (93 aa). Catalysis depends on residues Arg-20 and Asn-38.

The protein belongs to the acylphosphatase family.

The enzyme catalyses an acyl phosphate + H2O = a carboxylate + phosphate + H(+). This Bradyrhizobium diazoefficiens (strain JCM 10833 / BCRC 13528 / IAM 13628 / NBRC 14792 / USDA 110) protein is Acylphosphatase (acyP).